The following is a 480-amino-acid chain: Beta-amyrin 28-monooxygenase (480 aa).

The helical transmembrane segment at 3 to 23 threads the bilayer; sequence VFFLSLLLICVLSVSIRLYLL. C427 contributes to the heme binding site.

It belongs to the cytochrome P450 family. It depends on heme as a cofactor. As to expression, expressed in leaves, stems and fruit skin.

The protein localises to the membrane. The catalysed reaction is beta-amyrin + 3 reduced [NADPH--hemoprotein reductase] + 3 O2 = oleanolate + 3 oxidized [NADPH--hemoprotein reductase] + 4 H2O + 4 H(+). Its function is as follows. Catalyzes the carboxylation of beta-amyrin at the C-28 position to form oleanolic acid. May be involved in saponin biosynthesis in fruit skin. This is Beta-amyrin 28-monooxygenase from Vitis vinifera (Grape).